Here is a 377-residue protein sequence, read N- to C-terminus: Homocitrate synthase 1 (377 aa).

The 252-residue stretch at 4-255 (VLINDTTLRD…DMGIDTPRLL (252 aa)) folds into the Pyruvate carboxyltransferase domain.

Belongs to the alpha-IPM synthase/homocitrate synthase family.

It carries out the reaction acetyl-CoA + 2-oxoglutarate + H2O = (2R)-homocitrate + CoA + H(+). Functionally, this protein is a Fe-Mo-cofactor biosynthetic component. This Nostoc sp. (strain PCC 7120 / SAG 25.82 / UTEX 2576) protein is Homocitrate synthase 1 (nifV1).